We begin with the raw amino-acid sequence, 436 residues long: Citrate synthase (436 aa).

Residues H313 and D371 contribute to the active site.

It belongs to the citrate synthase family. Homohexamer.

It carries out the reaction oxaloacetate + acetyl-CoA + H2O = citrate + CoA + H(+). It functions in the pathway carbohydrate metabolism; tricarboxylic acid cycle; isocitrate from oxaloacetate: step 1/2. The chain is Citrate synthase (aarA) from Acetobacter aceti.